The primary structure comprises 198 residues: Protein GrpE (198 aa).

The interval 1–58 (MTEKDQSVNNEEFAEKEDNTAKDSNTDEQIEKTASEDDVQNDSSAVDDKEKEIQQLKE) is disordered. Basic and acidic residues-rich tracts occupy residues 16 to 35 (KEDN…KTAS) and 46 to 58 (VDDK…QLKE).

This sequence belongs to the GrpE family. As to quaternary structure, homodimer.

The protein resides in the cytoplasm. Functionally, participates actively in the response to hyperosmotic and heat shock by preventing the aggregation of stress-denatured proteins, in association with DnaK and GrpE. It is the nucleotide exchange factor for DnaK and may function as a thermosensor. Unfolded proteins bind initially to DnaJ; upon interaction with the DnaJ-bound protein, DnaK hydrolyzes its bound ATP, resulting in the formation of a stable complex. GrpE releases ADP from DnaK; ATP binding to DnaK triggers the release of the substrate protein, thus completing the reaction cycle. Several rounds of ATP-dependent interactions between DnaJ, DnaK and GrpE are required for fully efficient folding. The polypeptide is Protein GrpE (Staphylococcus carnosus (strain TM300)).